A 131-amino-acid chain; its full sequence is Sperm microtubule inner protein 11 (131 aa).

The tract at residues 17 to 44 (SKKRDKTEETNQKDPVPTRLPPIFSEDG) is disordered.

As to quaternary structure, microtubule inner protein component of sperm flagellar doublet microtubules. As to expression, expressed in sperm.

It localises to the cytoplasm. It is found in the cytoskeleton. Its subcellular location is the flagellum axoneme. Functionally, microtubule inner protein (MIP) part of the dynein-decorated doublet microtubules (DMTs) in flagellum axoneme. May serve to reinforce and thus stabilize the microtubule structure in the sperm flagella. This chain is Sperm microtubule inner protein 11 (SPMIP11), found in Bos taurus (Bovine).